Consider the following 430-residue polypeptide: Serine--tRNA ligase (430 aa).

237–239 (TAE) provides a ligand contact to L-serine. Residue 268–270 (RSE) participates in ATP binding. Glutamate 291 lines the L-serine pocket. 355–358 (EISS) serves as a coordination point for ATP. Serine 391 is an L-serine binding site.

It belongs to the class-II aminoacyl-tRNA synthetase family. Type-1 seryl-tRNA synthetase subfamily. Homodimer. The tRNA molecule binds across the dimer.

The protein resides in the cytoplasm. The enzyme catalyses tRNA(Ser) + L-serine + ATP = L-seryl-tRNA(Ser) + AMP + diphosphate + H(+). It catalyses the reaction tRNA(Sec) + L-serine + ATP = L-seryl-tRNA(Sec) + AMP + diphosphate + H(+). Its pathway is aminoacyl-tRNA biosynthesis; selenocysteinyl-tRNA(Sec) biosynthesis; L-seryl-tRNA(Sec) from L-serine and tRNA(Sec): step 1/1. Its function is as follows. Catalyzes the attachment of serine to tRNA(Ser). Is also able to aminoacylate tRNA(Sec) with serine, to form the misacylated tRNA L-seryl-tRNA(Sec), which will be further converted into selenocysteinyl-tRNA(Sec). This chain is Serine--tRNA ligase, found in Yersinia pseudotuberculosis serotype O:1b (strain IP 31758).